A 218-amino-acid polypeptide reads, in one-letter code: Protein-methionine-sulfoxide reductase heme-binding subunit MsrQ (218 aa).

Transmembrane regions (helical) follow at residues 14 to 34 (AVHA…WQVW), 60 to 80 (LLLI…AVLI), 86 to 106 (LGLY…WLDL), 121 to 141 (PYIT…ITST), and 155 to 175 (LHML…WLVK).

The protein belongs to the MsrQ family. As to quaternary structure, heterodimer of a catalytic subunit (MsrP) and a heme-binding subunit (MsrQ). FMN is required as a cofactor. Heme b serves as cofactor.

The protein localises to the cell inner membrane. Its function is as follows. Part of the MsrPQ system that repairs oxidized periplasmic proteins containing methionine sulfoxide residues (Met-O), using respiratory chain electrons. Thus protects these proteins from oxidative-stress damage caused by reactive species of oxygen and chlorine generated by the host defense mechanisms. MsrPQ is essential for the maintenance of envelope integrity under bleach stress, rescuing a wide series of structurally unrelated periplasmic proteins from methionine oxidation. MsrQ provides electrons for reduction to the reductase catalytic subunit MsrP, using the quinone pool of the respiratory chain. This Xanthomonas campestris pv. campestris (strain B100) protein is Protein-methionine-sulfoxide reductase heme-binding subunit MsrQ.